A 342-amino-acid polypeptide reads, in one-letter code: Polygalacturonase inhibitor 2 (342 aa).

Positions 1–29 (MTQFNIPVTMSSSLSIILVILVSLSTAHS) are cleaved as a signal peptide. Cystine bridges form between C32–C62 and C63–C72. N-linked (GlcNAc...) (complex) asparagine glycosylation occurs at N64. LRR repeat units follow at residues 82-107 (NNLD…LPYL), 108-132 (NFLY…LTQL), 133-156 (HYLY…IKTL), 157-180 (VTLD…LPNL), 181-205 (VGIT…SKLF), 206-228 (TSMT…NLNL), 229-252 (AFVD…DKNT), 253-275 (QKIH…SKNL), 276-299 (NGLD…LKFL), and 300-319 (HSLN…GGNL). N141 is a glycosylation site (N-linked (GlcNAc...) (complex) asparagine). N303 carries an N-linked (GlcNAc...) asparagine glycan. Intrachain disulfides connect C310–C332 and C334–C341.

The protein belongs to the polygalacturonase-inhibiting protein family. Post-translationally, asn-303 is not glycosylated.

The protein localises to the secreted. It localises to the cell wall. The protein resides in the membrane. Its function is as follows. Inhibitor of fungal polygalacturonase. It is an important factor for plant resistance to phytopathogenic fungi. Inhibits all polygalacturonases (PG) tested, with the exception of PG from F.oxysporum which was only inhibited at 60%. In Phaseolus vulgaris (Kidney bean), this protein is Polygalacturonase inhibitor 2 (PGIP2).